Consider the following 339-residue polypeptide: Dihydroorotate dehydrogenase (quinone) (339 aa).

Residues A64–K68 and T88 contribute to the FMN site. K68 serves as a coordination point for substrate. Residue N113–F117 participates in substrate binding. FMN-binding residues include N141 and N174. N174 serves as a coordination point for substrate. S177 serves as the catalytic Nucleophile. N179 is a substrate binding site. Residues K219 and T247 each coordinate FMN. N248–T249 is a substrate binding site. FMN contacts are provided by residues G270, G299, and Y320–S321.

It belongs to the dihydroorotate dehydrogenase family. Type 2 subfamily. Monomer. The cofactor is FMN.

Its subcellular location is the cell membrane. The catalysed reaction is (S)-dihydroorotate + a quinone = orotate + a quinol. It participates in pyrimidine metabolism; UMP biosynthesis via de novo pathway; orotate from (S)-dihydroorotate (quinone route): step 1/1. Functionally, catalyzes the conversion of dihydroorotate to orotate with quinone as electron acceptor. The sequence is that of Dihydroorotate dehydrogenase (quinone) from Haemophilus influenzae (strain 86-028NP).